A 362-amino-acid polypeptide reads, in one-letter code: 3-dehydroquinate synthase (362 aa).

Residues 70–75, 104–108, 128–129, lysine 141, lysine 150, and 168–171 contribute to the NAD(+) site; these read EGEQYK, GVIGD, TT, and TLTT. Zn(2+) is bound by residues glutamate 183, histidine 246, and histidine 263.

The protein belongs to the sugar phosphate cyclases superfamily. Dehydroquinate synthase family. It depends on Co(2+) as a cofactor. Zn(2+) is required as a cofactor. Requires NAD(+) as cofactor.

The protein localises to the cytoplasm. The catalysed reaction is 7-phospho-2-dehydro-3-deoxy-D-arabino-heptonate = 3-dehydroquinate + phosphate. It functions in the pathway metabolic intermediate biosynthesis; chorismate biosynthesis; chorismate from D-erythrose 4-phosphate and phosphoenolpyruvate: step 2/7. In terms of biological role, catalyzes the conversion of 3-deoxy-D-arabino-heptulosonate 7-phosphate (DAHP) to dehydroquinate (DHQ). The protein is 3-dehydroquinate synthase of Histophilus somni (strain 129Pt) (Haemophilus somnus).